The primary structure comprises 270 residues: Esterase (270 aa).

Catalysis depends on charge relay system residues Ser-127, Asp-216, and His-244.

It belongs to the LovG family.

It functions in the pathway mycotoxin biosynthesis. In terms of biological role, esterase; part of the gene cluster that mediates the biosynthesis of the selective antifungal agent ascochitine, an o-quinone methide that plays a possible protective role against other microbial competitors in nature and is considered to be important for pathogenicity of legume-associated Didymella species. The pathway probably begins with the synthesis of a keto-aldehyde intermediate by the ascochitine non-reducing polyketide synthase pksAC from successive condensations of 4 malonyl-CoA units, presumably with a simple acetyl-CoA starter unit. Release of the keto-aldehyde intermediate is consistent with the presence of the C-terminal reductive release domain. The HR-PKS (orf7) probably makes a diketide starter unit which is passed to the non-reducing polyketide synthase pksAC for further extension, producing ascochital and ascochitine. The aldehyde dehydrogenase (orf1), the 2-oxoglutarate-dependent dioxygenase (orf3) and the dehydrogenase (orf9) are probably involved in subsequent oxidations of methyl groups to the carboxylic acid of the heterocyclic ring. The ascochitine gene cluster also includes a gene encoding a short peptide with a cupin domain (orf2) that is often found in secondary metabolite gene clusters and which function has still to be determined. The polypeptide is Esterase (Didymella fabae (Leaf and pod spot disease fungus)).